The primary structure comprises 125 residues: Small ribosomal subunit protein uS12 (125 aa).

A disordered region spans residues Arg-9–Pro-28. At Asp-89 the chain carries 3-methylthioaspartic acid. Positions Ala-104–Ala-125 are disordered. Over residues Gly-113–Ala-125 the composition is skewed to basic residues.

This sequence belongs to the universal ribosomal protein uS12 family. Part of the 30S ribosomal subunit. Contacts proteins S8 and S17. May interact with IF1 in the 30S initiation complex.

With S4 and S5 plays an important role in translational accuracy. In terms of biological role, interacts with and stabilizes bases of the 16S rRNA that are involved in tRNA selection in the A site and with the mRNA backbone. Located at the interface of the 30S and 50S subunits, it traverses the body of the 30S subunit contacting proteins on the other side and probably holding the rRNA structure together. The combined cluster of proteins S8, S12 and S17 appears to hold together the shoulder and platform of the 30S subunit. The chain is Small ribosomal subunit protein uS12 from Rippkaea orientalis (strain PCC 8801 / RF-1) (Cyanothece sp. (strain PCC 8801)).